The following is a 264-amino-acid chain: Pro-opiomelanocortin (264 aa).

A signal peptide spans 1–26 (MPRSCCSRSGALLLALLLQASMEVRG). Phenylalanine 87 bears the Phenylalanine amide mark. 2 disordered regions span residues 88–204 (GRRN…DLEH) and 219–238 (RMEH…GGFM). A glycan (N-linked (GlcNAc...) asparagine) is linked at asparagine 91. Basic and acidic residues-rich tracts occupy residues 99 to 122 (QKRE…EPRG) and 130 to 142 (REGK…EHFR). Glutamate 131 carries the post-translational modification Glutamic acid 1-amide. Serine 135 is subject to N-acetylserine; in Corticotropin. Valine 147 is modified (valine amide). Serine 165 bears the Phosphoserine mark. A compositionally biased stretch (basic and acidic residues) spans 172–186 (EFKRELTGQRPRAGD). Low complexity predominate over residues 189–199 (DGPADDGAGPR). The segment covering 219–234 (RMEHFRWGSPPKDKRY) has biased composition (basic and acidic residues).

This sequence belongs to the POMC family. Post-translationally, specific enzymatic cleavages at paired basic residues yield the different active peptides. As to expression, ACTH and MSH are produced by the pituitary gland.

It localises to the secreted. In terms of biological role, stimulates the adrenal glands to release cortisol. Its function is as follows. Anorexigenic peptide. Increases the pigmentation of skin by increasing melanin production in melanocytes. Increases the pigmentation of skin by increasing melanin production in melanocytes. Functionally, endogenous orexigenic opiate. In terms of biological role, endogenous opiate. The sequence is that of Pro-opiomelanocortin (POMC) from Macaca nemestrina (Pig-tailed macaque).